The chain runs to 470 residues: 6-phosphofructo-2-kinase/fructose-2,6-bisphosphatase (470 aa).

The interval 1–249 is 6-phosphofructo-2-kinase; sequence MAAVASGQLT…VYYLMNTHVT (249 aa). Ser-31 carries the phosphoserine; by PKA modification. An ATP-binding site is contributed by 47–55; the sequence is GLRRPGKTY. The beta-D-fructose 6-phosphate site is built by Arg-80 and Arg-104. Residue Asp-130 is part of the active site. Beta-D-fructose 6-phosphate contacts are provided by Thr-132 and Arg-138. Cys-160 is a catalytic residue. 169–174 is an ATP binding site; that stretch reads NIKQVK. Positions 174, 195, and 199 each coordinate beta-D-fructose 6-phosphate. The tract at residues 250 to 469 is fructose-2,6-bisphosphatase; sequence PRAIYLSRHG…AEALVTVPEH (220 aa). Arg-257 contributes to the beta-D-fructose 2,6-bisphosphate binding site. His-258 functions as the Tele-phosphohistidine intermediate in the catalytic mechanism. The beta-D-fructose 2,6-bisphosphate site is built by Asn-264 and Gly-270. Residue Glu-327 is the Proton donor/acceptor of the active site. Residues Tyr-338, Arg-352, Lys-356, Tyr-367, Gln-393, and Arg-397 each contribute to the beta-D-fructose 2,6-bisphosphate site. 349 to 352 provides a ligand contact to ATP; sequence FALR. Residues 393 to 397 and Tyr-429 each bind ATP; that span reads QAVMR.

In the C-terminal section; belongs to the phosphoglycerate mutase family. As to quaternary structure, homodimer. In terms of tissue distribution, liver.

The enzyme catalyses beta-D-fructose 2,6-bisphosphate + H2O = beta-D-fructose 6-phosphate + phosphate. The catalysed reaction is beta-D-fructose 6-phosphate + ATP = beta-D-fructose 2,6-bisphosphate + ADP + H(+). Phosphorylation results in inhibition of the kinase activity. Synthesis and degradation of fructose 2,6-bisphosphate. The chain is 6-phosphofructo-2-kinase/fructose-2,6-bisphosphatase from Gallus gallus (Chicken).